Reading from the N-terminus, the 328-residue chain is Glycerol-3-phosphate dehydrogenase [NAD(P)+] (328 aa).

NADPH-binding residues include tryptophan 11, arginine 30, and lysine 103. Positions 103, 132, and 134 each coordinate sn-glycerol 3-phosphate. Residue alanine 136 participates in NADPH binding. Residues lysine 187, aspartate 240, serine 250, arginine 251, and asparagine 252 each coordinate sn-glycerol 3-phosphate. Lysine 187 serves as the catalytic Proton acceptor. Arginine 251 contacts NADPH. Positions 275 and 277 each coordinate NADPH.

It belongs to the NAD-dependent glycerol-3-phosphate dehydrogenase family.

The protein resides in the cytoplasm. The catalysed reaction is sn-glycerol 3-phosphate + NAD(+) = dihydroxyacetone phosphate + NADH + H(+). It catalyses the reaction sn-glycerol 3-phosphate + NADP(+) = dihydroxyacetone phosphate + NADPH + H(+). The protein operates within membrane lipid metabolism; glycerophospholipid metabolism. Its function is as follows. Catalyzes the reduction of the glycolytic intermediate dihydroxyacetone phosphate (DHAP) to sn-glycerol 3-phosphate (G3P), the key precursor for phospholipid synthesis. In Aromatoleum aromaticum (strain DSM 19018 / LMG 30748 / EbN1) (Azoarcus sp. (strain EbN1)), this protein is Glycerol-3-phosphate dehydrogenase [NAD(P)+].